The chain runs to 89 residues: Small ribosomal subunit protein uS15 (89 aa).

The protein belongs to the universal ribosomal protein uS15 family. In terms of assembly, part of the 30S ribosomal subunit. Forms a bridge to the 50S subunit in the 70S ribosome, contacting the 23S rRNA.

In terms of biological role, one of the primary rRNA binding proteins, it binds directly to 16S rRNA where it helps nucleate assembly of the platform of the 30S subunit by binding and bridging several RNA helices of the 16S rRNA. Forms an intersubunit bridge (bridge B4) with the 23S rRNA of the 50S subunit in the ribosome. This Oleidesulfovibrio alaskensis (strain ATCC BAA-1058 / DSM 17464 / G20) (Desulfovibrio alaskensis) protein is Small ribosomal subunit protein uS15.